The primary structure comprises 262 residues: Acyl-[acyl-carrier-protein]--UDP-N-acetylglucosamine O-acyltransferase (262 aa).

This sequence belongs to the transferase hexapeptide repeat family. LpxA subfamily. As to quaternary structure, homotrimer.

It is found in the cytoplasm. It carries out the reaction a (3R)-hydroxyacyl-[ACP] + UDP-N-acetyl-alpha-D-glucosamine = a UDP-3-O-[(3R)-3-hydroxyacyl]-N-acetyl-alpha-D-glucosamine + holo-[ACP]. Its pathway is glycolipid biosynthesis; lipid IV(A) biosynthesis; lipid IV(A) from (3R)-3-hydroxytetradecanoyl-[acyl-carrier-protein] and UDP-N-acetyl-alpha-D-glucosamine: step 1/6. Functionally, involved in the biosynthesis of lipid A, a phosphorylated glycolipid that anchors the lipopolysaccharide to the outer membrane of the cell. This is Acyl-[acyl-carrier-protein]--UDP-N-acetylglucosamine O-acyltransferase from Vibrio atlanticus (strain LGP32) (Vibrio splendidus (strain Mel32)).